The following is a 1404-amino-acid chain: DNA-directed RNA polymerase subunit beta' (1404 aa).

C70, C72, C85, and C88 together coordinate Zn(2+). Mg(2+)-binding residues include D460, D462, and D464. Positions 814, 888, 895, and 898 each coordinate Zn(2+).

It belongs to the RNA polymerase beta' chain family. The RNAP catalytic core consists of 2 alpha, 1 beta, 1 beta' and 1 omega subunit. When a sigma factor is associated with the core the holoenzyme is formed, which can initiate transcription. Mg(2+) serves as cofactor. It depends on Zn(2+) as a cofactor.

It catalyses the reaction RNA(n) + a ribonucleoside 5'-triphosphate = RNA(n+1) + diphosphate. DNA-dependent RNA polymerase catalyzes the transcription of DNA into RNA using the four ribonucleoside triphosphates as substrates. In Shewanella loihica (strain ATCC BAA-1088 / PV-4), this protein is DNA-directed RNA polymerase subunit beta'.